We begin with the raw amino-acid sequence, 407 residues long: Complement decay-accelerating factor transmembrane isoform (407 aa).

A signal peptide spans 1-39 (MVSSTWGYDPRAGAGDLVITTTAAGAVTIAVLLFQTVCG). 4 Sushi domains span residues 40 to 101 (DCGP…FCEK), 102 to 165 (SCDT…FCKK), 166 to 227 (KSCP…VCTE), and 228 to 291 (IFCP…QCIE). Over 40 to 368 (DCGPPPDIPN…NSGGDRYIYG (329 aa)) the chain is Extracellular. 8 cysteine pairs are disulfide-bonded: Cys-41–Cys-86, Cys-70–Cys-99, Cys-103–Cys-150, Cys-134–Cys-163, Cys-168–Cys-209, Cys-195–Cys-225, Cys-230–Cys-272, and Cys-258–Cys-289. Residue Asn-192 is glycosylated (N-linked (GlcNAc...) asparagine). A glycan (N-linked (GlcNAc...) asparagine) is linked at Asn-267. The segment at 301 to 361 (VVNVPSTGIP…STDKGESNSG (61 aa)) is disordered. The span at 306 to 324 (STGIPSTPQKPTTESVPNP) shows a compositional bias: polar residues. The span at 343–357 (HEPDTTTRTSTDKGE) shows a compositional bias: basic and acidic residues. A helical transmembrane segment spans residues 369–389 (FVAVIAMIDSLIIVKTLWTIL). Residues 390–407 (SPNRRSDFQGKERKDVSK) lie on the Cytoplasmic side of the membrane.

The protein belongs to the receptors of complement activation (RCA) family. In terms of tissue distribution, testis, spleen and lymph node.

Its subcellular location is the membrane. In terms of biological role, this protein recognizes C4b and C3b fragments that condense with cell-surface hydroxyl or amino groups when nascent C4b and C3b are locally generated during C4 and c3 activation. Interaction of daf with cell-associated C4b and C3b polypeptides interferes with their ability to catalyze the conversion of C2 and factor B to enzymatically active C2a and Bb and thereby prevents the formation of C4b2a and C3bBb, the amplification convertases of the complement cascade. Inhibits complement activation by destabilizing and preventing the formation of C3 and C5 convertases, which prevents complement damage. The chain is Complement decay-accelerating factor transmembrane isoform (Cd55b) from Mus musculus (Mouse).